The chain runs to 1607 residues: Laminin subunit gamma-1 (1607 aa).

Residues 1-33 form the signal peptide; sequence MTGGGRAALALQPRGRLWPLLAVLAAVAGCVRA. In terms of domain architecture, Laminin N-terminal spans 44-283; it reads RPQRCMPEFV…AISDFAVGGR (240 aa). N-linked (GlcNAc...) asparagine glycosylation is found at Asn-58 and Asn-132. 15 disulfides stabilise this stretch: Cys-284–Cys-293, Cys-286–Cys-303, Cys-305–Cys-314, Cys-340–Cys-349, Cys-342–Cys-365, Cys-368–Cys-377, Cys-380–Cys-393, Cys-396–Cys-408, Cys-398–Cys-414, Cys-416–Cys-425, Cys-428–Cys-440, Cys-443–Cys-454, Cys-445–Cys-461, Cys-463–Cys-472, and Cys-475–Cys-490. Laminin EGF-like domains are found at residues 284–339, 340–395, 396–442, and 443–492; these read CKCN…ESLP, CDCN…ACSP, CHCS…GCRP, and CSCD…GCTP. Positions 493 to 502 constitute a Laminin EGF-like 5; first part domain; that stretch reads CFCFGHSSVC. Residues 512–687 enclose the Laminin IV type A domain; the sequence is DISSTFQIDE…PGVPATWVES (176 aa). Residues Asn-574 and Asn-648 are each glycosylated (N-linked (GlcNAc...) asparagine). The region spanning 688–721 is the Laminin EGF-like 5; second part domain; it reads CTCPVGYGGQFCETCLPGYRRETPSLGPYSPCVL. 24 disulfide bridges follow: Cys-722/Cys-731, Cys-724/Cys-738, Cys-740/Cys-749, Cys-752/Cys-768, Cys-771/Cys-779, Cys-773/Cys-790, Cys-793/Cys-802, Cys-805/Cys-823, Cys-826/Cys-840, Cys-828/Cys-847, Cys-850/Cys-859, Cys-862/Cys-879, Cys-882/Cys-896, Cys-884/Cys-903, Cys-905/Cys-914, Cys-917/Cys-930, Cys-933/Cys-945, Cys-935/Cys-952, Cys-954/Cys-963, Cys-966/Cys-978, Cys-981/Cys-993, Cys-983/Cys-999, Cys-1001/Cys-1010, and Cys-1013/Cys-1026. Laminin EGF-like domains lie at 722 to 770 and 771 to 825; these read CTCN…DCQP and CPCP…LCRP. In terms of domain architecture, Laminin EGF-like 8; nidogen-binding spans 826–881; that stretch reads CQCNDNIDPNAVGNCNRLTGECLKCIYNTAGFYCDRCKEGFFGNPLAPNPADKCKA. Laminin EGF-like domains lie at 882–932, 933–980, and 981–1028; these read CACN…GCER, CDCH…GCKP, and CDCH…GCQE. N-linked (GlcNAc...) asparagine glycosylation is found at Asn-1020 and Asn-1105. The interval 1029–1607 is domain II and I; that stretch reads CPACYRLVKD…CFNTPSIEKP (579 aa). A coiled-coil region spans residues 1034 to 1594; the sequence is RLVKDKAAEH…HNLEDIKKTL (561 aa). Phosphoserine is present on Ser-1147. N-linked (GlcNAc...) asparagine glycans are attached at residues Asn-1159, Asn-1173, Asn-1203, Asn-1221, Asn-1239, Asn-1378, Asn-1393, and Asn-1437. Ser-1491 carries the phosphoserine modification.

In terms of assembly, laminin is a complex glycoprotein, consisting of three different polypeptide chains (alpha, beta, gamma), which are bound to each other by disulfide bonds into a cross-shaped molecule comprising one long and three short arms with globules at each end. Gamma-1 is a subunit of laminin-1 (laminin-111 or EHS laminin), laminin-2 (laminin-211 or merosin), laminin-3 (laminin-121 or S-laminin), laminin-4 (laminin-221 or S-merosin), laminin-6 (laminin-311 or K-laminin), laminin-7 (laminin-321 or KS-laminin), laminin-8 (laminin-411), laminin-9 (laminin-421), laminin-10 (laminin-511) and laminin-11 (laminin-521). Interacts with SVEP1. As to expression, found in the basement membranes (major component).

Its subcellular location is the secreted. The protein resides in the extracellular space. It localises to the extracellular matrix. It is found in the basement membrane. Functionally, binding to cells via a high affinity receptor, laminin is thought to mediate the attachment, migration and organization of cells into tissues during embryonic development by interacting with other extracellular matrix components. This chain is Laminin subunit gamma-1 (Lamc1), found in Mus musculus (Mouse).